The primary structure comprises 880 residues: Leucine--tRNA ligase (880 aa).

The 'HIGH' region signature appears at Pro49 to His59. A 'KMSKS' region motif is present at residues Lys638–Ser642. Position 641 (Lys641) interacts with ATP.

It belongs to the class-I aminoacyl-tRNA synthetase family.

It localises to the cytoplasm. The catalysed reaction is tRNA(Leu) + L-leucine + ATP = L-leucyl-tRNA(Leu) + AMP + diphosphate. The sequence is that of Leucine--tRNA ligase from Bartonella henselae (strain ATCC 49882 / DSM 28221 / CCUG 30454 / Houston 1) (Rochalimaea henselae).